We begin with the raw amino-acid sequence, 310 residues long: tRNA dimethylallyltransferase (310 aa).

11 to 18 (GPTAVGKT) serves as a coordination point for ATP. Residue 13–18 (TAVGKT) participates in substrate binding. Positions 36-39 (DSMQ) are interaction with substrate tRNA.

It belongs to the IPP transferase family. As to quaternary structure, monomer. Mg(2+) serves as cofactor.

The enzyme catalyses adenosine(37) in tRNA + dimethylallyl diphosphate = N(6)-dimethylallyladenosine(37) in tRNA + diphosphate. Catalyzes the transfer of a dimethylallyl group onto the adenine at position 37 in tRNAs that read codons beginning with uridine, leading to the formation of N6-(dimethylallyl)adenosine (i(6)A). This chain is tRNA dimethylallyltransferase, found in Shouchella clausii (strain KSM-K16) (Alkalihalobacillus clausii).